Reading from the N-terminus, the 103-residue chain is Acylphosphatase-2 (103 aa).

Ser-2 is modified (N-acetylserine). The Acylphosphatase-like domain maps to 13-103; it reads SVDYEVFGRV…LDFSGFSTRY (91 aa). Cys-26 carries the post-translational modification S-glutathionyl cysteine; alternate. Catalysis depends on residues Arg-28 and Asn-46.

It belongs to the acylphosphatase family. Monomer (TU1) or homodimer (TU3) in absence of reducing factors; disulfide linked.

It catalyses the reaction an acyl phosphate + H2O = a carboxylate + phosphate + H(+). In terms of biological role, its physiological role is not yet clear. The protein is Acylphosphatase-2 (ACYP2) of Meleagris gallopavo (Wild turkey).